A 409-amino-acid chain; its full sequence is Type II methyltransferase M.BsuFI (409 aa).

In terms of domain architecture, SAM-dependent MTase C5-type spans 101–402 (LTFIDLFAGI…GAMKERLLLA (302 aa)). Cysteine 170 is an active-site residue.

It belongs to the class I-like SAM-binding methyltransferase superfamily. C5-methyltransferase family.

It catalyses the reaction a 2'-deoxycytidine in DNA + S-adenosyl-L-methionine = a 5-methyl-2'-deoxycytidine in DNA + S-adenosyl-L-homocysteine + H(+). A methylase, recognizes the double-stranded sequence 5'-CCGG-3', methylates C-1 on both strands, and protects the DNA from cleavage by the BsuFI endonuclease. This Bacillus subtilis protein is Type II methyltransferase M.BsuFI (hsdFM).